Reading from the N-terminus, the 197-residue chain is Methylamine utilization protein MauD (197 aa).

Residues 3 to 23 (FLIASNILLWIAFLGVTVVML) form a helical membrane-spanning segment. Residues 48–180 (PDIGDMAPEF…LESLLEADKT (133 aa)) form the Thioredoxin domain.

The protein resides in the membrane. It participates in one-carbon metabolism; methylamine degradation. In terms of biological role, may be specifically involved in the processing, transport, and/or maturation of the MADH beta-subunit. This chain is Methylamine utilization protein MauD (mauD), found in Paracoccus versutus (Thiobacillus versutus).